The following is a 505-amino-acid chain: Dolichyl pyrophosphate Glc1Man9GlcNAc2 alpha-1,3-glucosyltransferase (505 aa).

The Lumenal segment spans residues 1 to 3; the sequence is MAE. Residues 4-24 form a helical membrane-spanning segment; that stretch reads IYPSLVQCAIVATAFKVLLFP. At 25-101 the chain is on the cytoplasmic side; the sequence is AYKSTDFEVH…DSWQTVYFQR (77 aa). The helical transmembrane segment at 102–122 threads the bilayer; sequence WTVIVTELVLLYALQMFVDST. At 123-128 the chain is on the lumenal side; sequence PGVSKR. Residues 129–149 traverse the membrane as a helical segment; that stretch reads AAHAAAVSILLSPGLLIIDHI. At 150–152 the chain is on the cytoplasmic side; that stretch reads HFQ. Residues 153-169 traverse the membrane as a helical segment; sequence YNGVMYGILIASLVLAK. Residues 170 to 173 lie on the Lumenal side of the membrane; it reads KKSS. Residues 174–194 traverse the membrane as a helical segment; sequence LLASGLVFAALLCMKHIYLYL. Over 195 to 224 the chain is Cytoplasmic; that stretch reads APAYFVYLLRVYCLPPKLSPRSIFRIQFFN. Residues 225 to 245 form a helical membrane-spanning segment; it reads CVKLGGGIAAIFAAAFGPFAL. At 246 to 319 the chain is on the lumenal side; the sequence is KNQIPQIFSR…TSFAVLPDIT (74 aa). A helical transmembrane segment spans residues 320–340; it reads PRMCFVLTLLFQAIPLIKLFM. At 341-359 the chain is on the cytoplasmic side; sequence RPTWEGFIGGVTLCGYASF. Residues 360 to 380 traverse the membrane as a helical segment; sequence LFGWHVHEKAILLVIIPFSLI. The Lumenal portion of the chain corresponds to 381 to 386; sequence ALKDRR. Residues 387-407 form a helical membrane-spanning segment; that stretch reads YLGAFRPLAVAGHVSLFPLIF. Residues 408–409 lie on the Cytoplasmic side of the membrane; the sequence is TP. The chain crosses the membrane as a helical span at residues 410 to 430; that stretch reads AEFPIKTVYTIFWLVLFLMAF. The Lumenal portion of the chain corresponds to 431-450; that stretch reads DRLAPAPTRQRLFLFDRFST. Residues 451–471 traverse the membrane as a helical segment; the sequence is AYITVSIPLIFYCSLMHGIIF. The Cytoplasmic segment spans residues 472 to 480; sequence GKSYEFLPL. A helical transmembrane segment spans residues 481–501; sequence MFTSSYSAIGVVGSWLGFMVV. Topologically, residues 502 to 505 are lumenal; sequence YFTE.

It belongs to the ALG6/ALG8 glucosyltransferase family.

It localises to the endoplasmic reticulum membrane. The catalysed reaction is an alpha-D-Glc-(1-&gt;3)-alpha-D-Man-(1-&gt;2)-alpha-D-Man-(1-&gt;2)-alpha-D-Man-(1-&gt;3)-[alpha-D-Man-(1-&gt;2)-alpha-D-Man-(1-&gt;3)-[alpha-D-Man-(1-&gt;2)-alpha-D-Man-(1-&gt;6)]-alpha-D-Man-(1-&gt;6)]-beta-D-Man-(1-&gt;4)-beta-D-GlcNAc-(1-&gt;4)-alpha-D-GlcNAc-diphospho-di-trans,poly-cis-dolichol + a di-trans,poly-cis-dolichyl beta-D-glucosyl phosphate = an alpha-D-Glc-(1-&gt;3)-alpha-D-Glc-(1-&gt;3)-alpha-D-Man-(1-&gt;2)-alpha-D-Man-(1-&gt;2)-alpha-D-Man-(1-&gt;3)-[alpha-D-Man-(1-&gt;2)-alpha-D-Man-(1-&gt;3)-[alpha-D-Man-(1-&gt;2)-alpha-D-Man-(1-&gt;6)]-alpha-D-Man-(1-&gt;6)]-beta-D-Man-(1-&gt;4)-beta-D-GlcNAc-(1-&gt;4)-alpha-D-GlcNAc-diphospho-di-trans,poly-cis-dolichol + a di-trans,poly-cis-dolichyl phosphate + H(+). The protein operates within protein modification; protein glycosylation. Functionally, dolichyl pyrophosphate Glc1Man9GlcNAc2 alpha-1,3-glucosyltransferase that operates in the biosynthetic pathway of dolichol-linked oligosaccharides, the glycan precursors employed in protein asparagine (N)-glycosylation. The assembly of dolichol-linked oligosaccharides begins on the cytosolic side of the endoplasmic reticulum membrane and finishes in its lumen. The sequential addition of sugars to dolichol pyrophosphate produces dolichol-linked oligosaccharides containing fourteen sugars, including two GlcNAcs, nine mannoses and three glucoses. Once assembled, the oligosaccharide is transferred from the lipid to nascent proteins by oligosaccharyltransferases. In the lumen of the endoplasmic reticulum, adds the second glucose residue from dolichyl phosphate glucose (Dol-P-Glc) onto the lipid-linked oligosaccharide intermediate Glc(1)Man(9)GlcNAc(2)-PP-Dol to produce Glc(2)Man(9)GlcNAc(2)-PP-Dol. The chain is Dolichyl pyrophosphate Glc1Man9GlcNAc2 alpha-1,3-glucosyltransferase (alg-8) from Neurospora crassa (strain ATCC 24698 / 74-OR23-1A / CBS 708.71 / DSM 1257 / FGSC 987).